The following is a 209-amino-acid chain: Guanylate kinase (209 aa).

Residues 9 to 188 (GIMLVISSPS…SVYQIKCIFT (180 aa)) form the Guanylate kinase-like domain. 16-23 (SPSGGGKT) is an ATP binding site.

Belongs to the guanylate kinase family.

The protein resides in the cytoplasm. It carries out the reaction GMP + ATP = GDP + ADP. Functionally, essential for recycling GMP and indirectly, cGMP. The chain is Guanylate kinase from Ehrlichia chaffeensis (strain ATCC CRL-10679 / Arkansas).